The following is a 157-amino-acid chain: Protein Smg homolog (157 aa).

It belongs to the Smg family.

The protein is Protein Smg homolog of Shewanella pealeana (strain ATCC 700345 / ANG-SQ1).